The following is a 415-amino-acid chain: Nacrein-like protein C2 (415 aa).

An N-linked (GlcNAc...) asparagine glycan is attached at Asn-27. Positions 33–414 (AGFSYDRSIC…KNKVTVYKSF (382 aa)) constitute an Alpha-carbonic anhydrase domain. His-132, His-134, and His-157 together coordinate Zn(2+). The interval 201–297 (DEPDDEECKH…GENGHKHGCR (97 aa)) is disordered. Over residues 207–219 (ECKHILKGHHPDN) the composition is skewed to basic and acidic residues. Residues 220 to 289 (NENGNGDNGN…NNGENGNNGE (70 aa)) show a composition bias toward low complexity. Tandem repeats lie at residues 225–227 (GDN), 228–230 (GNN), 231–233 (GYN), 234–236 (GDN), 237–239 (GNN), 240–242 (GDN), 243–245 (GNN), 246–248 (GYN), 249–251 (GDN), 252–254 (GNN), 255–257 (GVN), 258–260 (GNN), 261–263 (GYN), 264–266 (GDN), 267–269 (GNN), 270–272 (GDN), 273–275 (GNN), 276–278 (GEN), 279–281 (GNN), 282–284 (GEN), 285–286 (GN), and 288–290 (GEN). Residues 225-290 (GDNGNNGYNG…NGENGNNGEN (66 aa)) form a 27 X 3 AA approximate tandem repeats of G-X-N region. 355–356 (TT) is a substrate binding site.

It belongs to the alpha-carbonic anhydrase family. As to quaternary structure, homooligomer; disulfide-linked. May also be disulfide-linked to insoluble organic matrix. The cofactor is Zn(2+). In terms of tissue distribution, expressed in the mantle.

The protein resides in the secreted. Its subcellular location is the extracellular space. The protein localises to the extracellular matrix. It catalyses the reaction hydrogencarbonate + H(+) = CO2 + H2O. In terms of biological role, acts as a negative regulator for calcification in the shells of mollusks. May function both as a calcium concentrator and as a carbonic anhydrase required for production of carbonate ions, which are assembled to CaCO(3) at mineralization sites. Is important for shell formation in both the calcitic prismatic layer and the aragonitic nacreous layer. Shows inhibitory activity of crystal formation when present in free state but, when attached to the insoluble matrix, may regulate the form and size of aragonite crystal. The chain is Nacrein-like protein C2 from Crassostrea nippona (Iwagaki oyster).